Consider the following 311-residue polypeptide: Formimidoylglutamase (311 aa).

Mn(2+) contacts are provided by H127, D152, H154, D156, C236, and D238.

It belongs to the arginase family. The cofactor is Mn(2+).

It carries out the reaction N-formimidoyl-L-glutamate + H2O = formamide + L-glutamate. Its pathway is amino-acid degradation; L-histidine degradation into L-glutamate; L-glutamate from N-formimidoyl-L-glutamate (hydrolase route): step 1/1. Catalyzes the conversion of N-formimidoyl-L-glutamate to L-glutamate and formamide. This is Formimidoylglutamase from Macrococcus caseolyticus (strain JCSC5402) (Macrococcoides caseolyticum).